Reading from the N-terminus, the 491-residue chain is Delayed-rectifier potassium channel regulatory subunit KCNS3 (491 aa).

Topologically, residues 1–182 are cytoplasmic; it reads MVFGEFFHRP…IRMENPAYCL (182 aa). Residues 183 to 204 form a helical membrane-spanning segment; the sequence is SAKLIAISSLSVVLASIVAMCV. The Extracellular segment spans residues 205 to 220; the sequence is HSMSEFQNEDGEVDDP. The helical transmembrane segment at 221-243 threads the bilayer; it reads VLEGVEIACIAWFTGELAIRLVA. Residues 244–254 are Cytoplasmic-facing; the sequence is APSQKKFWKNP. A helical membrane pass occupies residues 255–275; it reads LNIIDFVSIIPFYATLAVDTK. The Extracellular segment spans residues 276–285; it reads EEESEDIENM. Residues 286–306 form a helical; Voltage-sensor membrane-spanning segment; that stretch reads GKVVQILRLMRIFRILKLARH. Over 307–321 the chain is Cytoplasmic; it reads SVGLRSLGATLRHSY. The helical transmembrane segment at 322–343 threads the bilayer; that stretch reads HEVGLLLLFLSVGISIFSVLIY. At 344–357 the chain is on the extracellular side; it reads SVEKDEHKSSLTSI. The segment at residues 358–369 is an intramembrane region (helical); the sequence is PICWWWATISMT. A Selectivity filter motif is present at residues 370-375; that stretch reads TVGYGD. Residues 370 to 377 lie within the membrane without spanning it; the sequence is TVGYGDTH. The Extracellular segment spans residues 378 to 384; it reads PVTLAGK. A helical transmembrane segment spans residues 385 to 413; the sequence is IIASTCIICGILVVALPITIIFNKFSKYY. At 414 to 491 the chain is on the cytoplasmic side; sequence QKQKDMEVDQ…TASLENCTGK (78 aa).

It belongs to the potassium channel family. S (TC 1.A.1.2) subfamily. Kv9.3/KCNS3 sub-subfamily. In terms of assembly, heterotetramer with KCNB1. Does not form homomultimers.

It is found in the cell membrane. Functionally, potassium channel regulatory subunit that modulates the delayed rectifier potassium channel activity of KCNB1 by namely slowing down the deactivation and inactivation time constants. While it does not form functional channel on its own, it can form functional heterotetrameric channels with KCNB1. The chain is Delayed-rectifier potassium channel regulatory subunit KCNS3 from Mus musculus (Mouse).